Reading from the N-terminus, the 81-residue chain is uncharacterized protein (81 aa).

To yeast YDL157C.

It is found in the mitochondrion. This is an uncharacterized protein from Schizosaccharomyces pombe (strain 972 / ATCC 24843) (Fission yeast).